Consider the following 174-residue polypeptide: FITAAFGIPQISTGDMLRAAIKAGTPLGLEAKKIIDEGGLVRDDIIIGMVKERIAQDDCKNGFLFDGFPRTLAQAEAMVEAGVDLDAVVEIDVPDSVIVDRMSGRRVHLASGRTYHVTYNPPKVEGKDDVTGEDLIQRDDDKEETVKKRLAVYHEQTEVLVDFYSKLEGEHAPK.

An NMP region spans residues 12–41 (STGDMLRAAIKAGTPLGLEAKKIIDEGGLV). AMP contacts are provided by residues threonine 13, arginine 18, 39–41 (GLV), 67–70 (GFPR), and glutamine 74. An LID region spans residues 104–141 (GRRVHLASGRTYHVTYNPPKVEGKDDVTGEDLIQRDDD). ATP is bound by residues arginine 105 and 114 to 115 (TY). 2 residues coordinate AMP: arginine 138 and arginine 149.

This sequence belongs to the adenylate kinase family. As to quaternary structure, monomer.

The protein resides in the cytoplasm. It carries out the reaction AMP + ATP = 2 ADP. The protein operates within purine metabolism; AMP biosynthesis via salvage pathway; AMP from ADP: step 1/1. In terms of biological role, catalyzes the reversible transfer of the terminal phosphate group between ATP and AMP. Plays an important role in cellular energy homeostasis and in adenine nucleotide metabolism. The polypeptide is Adenylate kinase (Neisseria lactamica).